A 445-amino-acid chain; its full sequence is Argininosuccinate synthase (445 aa).

ATP contacts are provided by residues 17–25 (AFSGGLDTS) and alanine 43. Tyrosine 99 provides a ligand contact to L-citrulline. Positions 129 and 131 each coordinate ATP. The L-aspartate site is built by threonine 131, asparagine 135, and aspartate 136. Asparagine 135 serves as a coordination point for L-citrulline. An ATP-binding site is contributed by aspartate 136. Arginine 139 and serine 192 together coordinate L-citrulline. Aspartate 194 contributes to the ATP binding site. The L-citrulline site is built by threonine 201, glutamate 203, and glutamate 280.

Belongs to the argininosuccinate synthase family. Type 2 subfamily. Homotetramer.

The protein resides in the cytoplasm. It catalyses the reaction L-citrulline + L-aspartate + ATP = 2-(N(omega)-L-arginino)succinate + AMP + diphosphate + H(+). It functions in the pathway amino-acid biosynthesis; L-arginine biosynthesis; L-arginine from L-ornithine and carbamoyl phosphate: step 2/3. This Burkholderia ambifaria (strain MC40-6) protein is Argininosuccinate synthase.